The primary structure comprises 137 residues: Large-conductance mechanosensitive channel (137 aa).

2 helical membrane-spanning segments follow: residues 15–35 and 81–101; these read VDLA…TSLV and GKFI…FFVI.

This sequence belongs to the MscL family. In terms of assembly, homopentamer.

The protein resides in the cell inner membrane. Functionally, channel that opens in response to stretch forces in the membrane lipid bilayer. May participate in the regulation of osmotic pressure changes within the cell. The sequence is that of Large-conductance mechanosensitive channel from Hyphomonas neptunium (strain ATCC 15444).